Consider the following 115-residue polypeptide: MARVKRGNIARKRRNKILNLAKGFRGGNKNLFRTANQRVMKALCNAYRDRRRRKRDFRRLWISRINASARINGTNYSKLINGMKNADIIINRKMLAQLAITDPKCFEKIVSSVSQ.

The protein belongs to the bacterial ribosomal protein bL20 family.

In terms of biological role, binds directly to 23S ribosomal RNA and is necessary for the in vitro assembly process of the 50S ribosomal subunit. It is not involved in the protein synthesizing functions of that subunit. In Prochlorococcus marinus (strain AS9601), this protein is Large ribosomal subunit protein bL20.